The sequence spans 323 residues: Down-regulator of invasive growth 2 (323 aa).

A compositionally biased stretch (acidic residues) spans 1–10; the sequence is MNKEEQEDPQ. Positions 1–26 are disordered; sequence MNKEEQEDPQQEQISTVQENDPRNLQ. A compositionally biased stretch (polar residues) spans 11–26; sequence QEQISTVQENDPRNLQ. S34 is modified (phosphoserine). The disordered stretch occupies residues 67-87; the sequence is LSQKEEDHSGKPPTITTSPAE. Phosphoserine occurs at positions 225, 266, and 270.

Forms a complex with DIG1, STE12 and either FUS3 or KSS1. The interaction of FUS3 with STE12 depends on the presence of both DIG1 and DIG2. STE12 is lost from FUS3/DIG1/DIG2 complex after pheromone treatment. DIG1 and DIG2 have also been reported to interact with CLN1 and CLN2. In terms of processing, phosphorylated by FUS3 and KSS1, in a pheromone-stimulated manner.

The protein resides in the nucleus. Its function is as follows. DIG2 and DIG1 are negative regulators of the filamentation and pheromone induced mating program. DIG1 and DIG2 inhibit the transcriptional activity of STE12 by direct protein-protein interaction. DIG2 binds to the DNA binding domain (DBD) of STE12 and thus inhibits transcription when overexpressed. This is Down-regulator of invasive growth 2 (DIG2) from Saccharomyces cerevisiae (strain ATCC 204508 / S288c) (Baker's yeast).